The sequence spans 158 residues: MARISTSSNRPVPTSSALRRQRERDDGGRSTRAPGHNTGLYGNQPGDPPTIRSTNTTVKRRYRPGTKALREIRRYQRSSELLIRKLPFARLVKEVAENYIGADYGIRWQSNAVLALQEACEAFLVHLLEDTNLCAIHAKRVTIMQKDIQLARRIRGNI.

Polar residues predominate over residues 1–18; sequence MARISTSSNRPVPTSSAL. Residues 1–59 form a disordered region; it reads MARISTSSNRPVPTSSALRRQRERDDGGRSTRAPGHNTGLYGNQPGDPPTIRSTNTTVK. Positions 20–29 are enriched in basic and acidic residues; that stretch reads RQRERDDGGR. The interval 54 to 157 is H3-like; that stretch reads TNTTVKRRYR…IQLARRIRGN (104 aa).

Belongs to the histone H3 family. Component of centromeric nucleosomes, where DNA is wrapped around a histone octamer core. The octamer contains two molecules each of H2A, H2B, CSE4/CENPA and H4 assembled in one CSE4-H4 heterotetramer and two H2A-H2B heterodimers. Interacts with the inner kinetochore. Ubiquitinated. Is degraded through ubiquitin-mediated proteolysis when not protected by its association to the kinetochore.

It localises to the nucleus. It is found in the chromosome. Its subcellular location is the centromere. Functionally, histone H3-like nucleosomal protein that is specifically found in centromeric nucleosomes. Replaces conventional H3 in the nucleosome core of centromeric chromatin that serves as an assembly site for the inner kinetochore. Required for recruitment and assembly of kinetochore proteins, mitotic progression and chromosome segregation. May serve as an epigenetic mark that propagates centromere identity through replication and cell division. The chain is Histone H3-like centromeric protein CSE4 (CSE4) from Millerozyma farinosa (Yeast).